Consider the following 160-residue polypeptide: Cyclic pyranopterin monophosphate synthase (160 aa).

Residues 75-77 (LCH) and 113-114 (ME) contribute to the substrate site. Asp128 is a catalytic residue.

The protein belongs to the MoaC family. As to quaternary structure, homohexamer; trimer of dimers.

It catalyses the reaction (8S)-3',8-cyclo-7,8-dihydroguanosine 5'-triphosphate = cyclic pyranopterin phosphate + diphosphate. The protein operates within cofactor biosynthesis; molybdopterin biosynthesis. Functionally, catalyzes the conversion of (8S)-3',8-cyclo-7,8-dihydroguanosine 5'-triphosphate to cyclic pyranopterin monophosphate (cPMP). This Ruthia magnifica subsp. Calyptogena magnifica protein is Cyclic pyranopterin monophosphate synthase.